We begin with the raw amino-acid sequence, 204 residues long: LEIQAIADDITSKYVPPHVNIFYCLGGITLTSFLVQVATGSAMTFYYRPTVTEAFASVQYLMTEVNFGWLIRSIHRWSASMMVLMMILHVFRVYLTGGFKKPRELTWVTGVILGVLTVSFGVTGYSLPWDQIGYWAVKIVTGVPEAIPVIGSPLVELLRGSVSVGQSTLTRFYSLHTFILPLLTAVFMPMHFLMIRKQGIPGPL.

A helical transmembrane segment spans residues 23–43; it reads YCLGGITLTSFLVQVATGSAM. Cys-24 is a binding site for heme c. 2 residues coordinate heme b: His-75 and His-89. Transmembrane regions (helical) follow at residues 81–101, 107–127, and 136–157; these read MMVL…GFKK, WVTG…GYSL, and AVKI…LVEL. The heme b site is built by His-176 and His-191. The chain crosses the membrane as a helical span at residues 177–197; the sequence is TFILPLLTAVFMPMHFLMIRK.

Belongs to the cytochrome b family. PetB subfamily. As to quaternary structure, the 4 large subunits of the cytochrome b6-f complex are cytochrome b6, subunit IV (17 kDa polypeptide, PetD), cytochrome f and the Rieske protein, while the 4 small subunits are PetG, PetL, PetM and PetN. The complex functions as a dimer. Heme b serves as cofactor. It depends on heme c as a cofactor.

It is found in the plastid. The protein localises to the chloroplast thylakoid membrane. Its function is as follows. Component of the cytochrome b6-f complex, which mediates electron transfer between photosystem II (PSII) and photosystem I (PSI), cyclic electron flow around PSI, and state transitions. The chain is Cytochrome b6 from Picea abies (Norway spruce).